We begin with the raw amino-acid sequence, 641 residues long: Ribosomal oxygenase 1 (641 aa).

N-acetylmethionine is present on Met-1. 2 disordered regions span residues 1–35 (MDGL…LPLR) and 54–80 (RTQT…DALP). A compositionally biased stretch (basic residues) spans 12 to 23 (RRGRPKRRRKPQ). Phosphoserine occurs at positions 60, 63, and 109. Positions 294–439 (CSLRLLCPQA…DFLEAILPLA (146 aa)) constitute a JmjC domain. 3 residues coordinate Fe cation: His-340, Asp-342, and His-405.

This sequence belongs to the ROX family. NO66 subfamily. Interacts with SP7/OSX; the interaction is direct. Interacts with MYC. Interacts with PHF19; leading to its recruitment to H3K36me3 sites. Requires Fe(2+) as cofactor. Widely expressed. Overexpressed in lung carcinomas.

It is found in the nucleus. The protein localises to the nucleolus. Its subcellular location is the nucleoplasm. It catalyses the reaction N(6),N(6)-dimethyl-L-lysyl(36)-[histone H3] + 2 2-oxoglutarate + 2 O2 = L-lysyl(36)-[histone H3] + 2 formaldehyde + 2 succinate + 2 CO2. The enzyme catalyses N(6)-methyl-L-lysyl-[protein] + 2-oxoglutarate + O2 = L-lysyl-[protein] + formaldehyde + succinate + CO2. It carries out the reaction L-histidyl-[protein] + 2-oxoglutarate + O2 = (3S)-3-hydroxy-L-histidyl-[protein] + succinate + CO2. In terms of biological role, oxygenase that can act as both a histone lysine demethylase and a ribosomal histidine hydroxylase. Specifically demethylates 'Lys-4' (H3K4me) and 'Lys-36' (H3K36me) of histone H3, thereby playing a central role in histone code. Preferentially demethylates trimethylated H3 'Lys-4' (H3K4me3) and monomethylated H3 'Lys-4' (H3K4me1) residues, while it has weaker activity for dimethylated H3 'Lys-36' (H3K36me2). Acts as a regulator of osteoblast differentiation via its interaction with SP7/OSX by demethylating H3K4me and H3K36me, thereby inhibiting SP7/OSX-mediated promoter activation. Also catalyzes demethylation of non-histone proteins, such as CGAS: demethylation of monomethylated CGAS promotes interaction between CGAS and PARP1, followed by PARP1 inactivation. Also catalyzes the hydroxylation of 60S ribosomal protein L8 on 'His-216', thereby playing a role in ribosome biogenesis. Participates in MYC-induced transcriptional activation. This chain is Ribosomal oxygenase 1, found in Homo sapiens (Human).